Consider the following 355-residue polypeptide: Ubiquinone biosynthesis protein COQ4 homolog, mitochondrial (355 aa).

H134, D135, H138, and E150 together coordinate Zn(2+).

Belongs to the COQ4 family. In terms of assembly, component of a multi-subunit COQ enzyme complex. The cofactor is Zn(2+).

The protein resides in the mitochondrion inner membrane. The enzyme catalyses a 4-hydroxy-3-methoxy-5-(all-trans-polyprenyl)benzoate + H(+) = a 2-methoxy-6-(all-trans-polyprenyl)phenol + CO2. Its pathway is cofactor biosynthesis; ubiquinone biosynthesis. In terms of biological role, lyase that catalyzes the C1-decarboxylation of 4-hydroxy-3-methoxy-5-(all-trans-polyprenyl)benzoic acid into 2-methoxy-6-(all-trans-polyprenyl)phenol during ubiquinone biosynthesis. This Plasmodium yoelii yoelii protein is Ubiquinone biosynthesis protein COQ4 homolog, mitochondrial.